Consider the following 136-residue polypeptide: MFIPKKTKYKKDFKGRISGNAKGGYTLAFGTYGLKSLEPGRLTSKQVESARRSISRTLKRVGKVWIRVFCHTPVSKKPMDVRMGKGKGSIEMWVCKVKPGKILFEISGVSLNLAKEALQKSQAKLPVKCKFISDEL.

It belongs to the universal ribosomal protein uL16 family. In terms of assembly, part of the 50S ribosomal subunit.

Binds 23S rRNA and is also seen to make contacts with the A and possibly P site tRNAs. The protein is Large ribosomal subunit protein uL16 of Ehrlichia ruminantium (strain Gardel).